The chain runs to 242 residues: Probable 2-phosphosulfolactate phosphatase (242 aa).

Belongs to the ComB family. The cofactor is Mg(2+).

It carries out the reaction (2R)-O-phospho-3-sulfolactate + H2O = (2R)-3-sulfolactate + phosphate. The chain is Probable 2-phosphosulfolactate phosphatase from Prochlorococcus marinus (strain NATL1A).